The chain runs to 402 residues: CinA-like protein (402 aa).

It belongs to the CinA family.

In Fusobacterium nucleatum subsp. nucleatum (strain ATCC 25586 / DSM 15643 / BCRC 10681 / CIP 101130 / JCM 8532 / KCTC 2640 / LMG 13131 / VPI 4355), this protein is CinA-like protein.